The following is a 258-amino-acid chain: Acetylglutamate kinase (258 aa).

Residues glycine 44–glycine 45, arginine 66, and asparagine 158 each bind substrate. ATP-binding positions include aspartate 181–leucine 186 and isoleucine 209–threonine 211.

The protein belongs to the acetylglutamate kinase family. ArgB subfamily. As to quaternary structure, homodimer.

It is found in the cytoplasm. The enzyme catalyses N-acetyl-L-glutamate + ATP = N-acetyl-L-glutamyl 5-phosphate + ADP. It functions in the pathway amino-acid biosynthesis; L-arginine biosynthesis; N(2)-acetyl-L-ornithine from L-glutamate: step 2/4. Catalyzes the ATP-dependent phosphorylation of N-acetyl-L-glutamate. This is Acetylglutamate kinase from Escherichia coli O157:H7.